The primary structure comprises 487 residues: L-tartrate/succinate antiporter (487 aa).

The next 14 helical transmembrane spans lie at 10-30, 33-53, 54-74, 93-113, 137-157, 189-209, 236-256, 292-312, 313-333, 340-360, 370-390, 393-413, 418-438, and 465-485; these read YLAPLAVIAIIALIPVPAGLE, TWLYFAVFTGVIVGLILEPVP, GAVVAMVGISIIAILSPWLLF, WAVSGFSNSVIWLIFAAFMFG, TLFLGYAVMFSELILAPVTPS, IGSYIMWMGIVADCVTSAIFL, FLGMLPLSILLVLLVPWLAYV, LMVGALVLWIFGGDYIDAAMV, GYSVVALMLLLRIISWDDIVS, VFFWLASLITLATGLNNTGFI, SLSGYSPTMVMVALIVVFYLL, FFASATAYTSALAPMMIAAAL, IPLPVFCLMVGAAIGLGSILT, and IFGLIFLVLLVITGLLWMPVV.

This sequence belongs to the SLC13A/DASS transporter (TC 2.A.47) family. DIT1 subfamily.

It localises to the cell inner membrane. The catalysed reaction is (2R,3R)-tartrate(out) + succinate(in) = (2R,3R)-tartrate(in) + succinate(out). Its function is as follows. Catalyzes the uptake of tartrate in exchange for intracellular succinate. Essential for anaerobic L-tartrate fermentation. This is L-tartrate/succinate antiporter (ttdT) from Escherichia coli O157:H7.